Consider the following 363-residue polypeptide: Peptide chain release factor 2 (363 aa).

At Gln-251 the chain carries N5-methylglutamine.

This sequence belongs to the prokaryotic/mitochondrial release factor family. Post-translationally, methylated by PrmC. Methylation increases the termination efficiency of RF2.

The protein localises to the cytoplasm. Peptide chain release factor 2 directs the termination of translation in response to the peptide chain termination codons UGA and UAA. The polypeptide is Peptide chain release factor 2 (Helicobacter pylori (strain G27)).